The following is a 259-amino-acid chain: Ribosomal RNA small subunit methyltransferase A (259 aa).

S-adenosyl-L-methionine-binding residues include asparagine 13, leucine 15, glycine 40, glutamate 61, aspartate 85, and asparagine 103.

It belongs to the class I-like SAM-binding methyltransferase superfamily. rRNA adenine N(6)-methyltransferase family. RsmA subfamily.

It is found in the cytoplasm. The catalysed reaction is adenosine(1518)/adenosine(1519) in 16S rRNA + 4 S-adenosyl-L-methionine = N(6)-dimethyladenosine(1518)/N(6)-dimethyladenosine(1519) in 16S rRNA + 4 S-adenosyl-L-homocysteine + 4 H(+). Specifically dimethylates two adjacent adenosines (A1518 and A1519) in the loop of a conserved hairpin near the 3'-end of 16S rRNA in the 30S particle. May play a critical role in biogenesis of 30S subunits. This is Ribosomal RNA small subunit methyltransferase A from Neisseria meningitidis serogroup C / serotype 2a (strain ATCC 700532 / DSM 15464 / FAM18).